A 562-amino-acid polypeptide reads, in one-letter code: Pyruvate kinase isozyme G, chloroplastic (562 aa).

Residue arginine 121 coordinates substrate. Residues asparagine 123, serine 125, aspartate 156, and threonine 157 each coordinate K(+). 123–126 (NMSH) contributes to the ATP binding site. Glutamate 308 contacts Mg(2+). Positions 331, 332, and 364 each coordinate substrate. Aspartate 332 lines the Mg(2+) pocket.

It belongs to the pyruvate kinase family. Homotetramer. Requires Mg(2+) as cofactor. K(+) is required as a cofactor. Highest levels in leaves. Also found in stems, roots and flowers.

Its subcellular location is the plastid. It is found in the chloroplast. The catalysed reaction is pyruvate + ATP = phosphoenolpyruvate + ADP + H(+). It participates in carbohydrate degradation; glycolysis; pyruvate from D-glyceraldehyde 3-phosphate: step 5/5. The sequence is that of Pyruvate kinase isozyme G, chloroplastic from Nicotiana tabacum (Common tobacco).